We begin with the raw amino-acid sequence, 246 residues long: Envelope glycoprotein gp95 (246 aa).

Residues 1–192 (IPSRPVGGPC…EWAVHLLKGL (192 aa)) are Extracellular-facing. The N-linked (GlcNAc...) asparagine; by host glycan is linked to Asn31. A disulfide bridge links Cys50 with Cys86. The segment at 58-78 (GPTARIFASILAPGVAAAQAL) is fusion peptide. Residues 75-125 (AQALREIERLACWSVKQANLTTSLLGDLLDDVTSIRHAVLQNRAAIDFLLL) adopt a coiled-coil conformation. Asn93 carries an N-linked (GlcNAc...) asparagine; by host glycan. The interval 114–130 (LQNRAAIDFLLLAHGHG) is immunosuppression. A disulfide bridge connects residues Cys131 and Cys138. Asn141 is a glycosylation site (N-linked (GlcNAc...) asparagine; by host). Positions 143-173 (SDQSESIQKKFQLMKEHVNKIGVDSDLIGSW) form a coiled coil. A helical membrane pass occupies residues 193–213 (LLGLVVILLLVVCLPCLLQML). 2 S-palmitoyl cysteine; by host lipidation sites follow: Cys205 and Cys208. Residues 214 to 246 (CGNRRKMINNSISYHTEYKKLQKACGQPESRIV) are Cytoplasmic-facing.

Belongs to the Alpharetroviruses envelope glycoprotein family. As to quaternary structure, heterodimer with the transmembrane protein. The mature envelope protein (Env) consists of a trimer of SU-TM heterodimers attached by a labile interchain disulfide bond. Interacts with the host cell entry receptor TVA isoforms pg900 and pg800; this interaction allows the viral attachment. In terms of assembly, heterodimer with the surface protein. The mature envelope protein (Env) consists of a trimer of SU-TM heterodimers attached by a labile interchain disulfide bond. In terms of processing, specific enzymatic cleavages in vivo yield mature proteins. Envelope glycoproteins are synthesized as an inactive precursor that is N-glycosylated and processed likely by host cell furin or by a furin-like protease in the Golgi to yield the mature SU and TM proteins. The cleavage site between SU and TM requires the minimal sequence [KR]-X-[KR]-R. The transmembrane protein is palmitoylated. Palmitoylation is necessary for glycoprotein function and infectivity.

It localises to the virion membrane. The protein localises to the host cell membrane. Functionally, the surface protein (SU) attaches the virus to the host cell entry receptor TVA. This interaction triggers the refolding of the transmembrane protein (TM) thereby unmasking its fusion peptide and the formation of a reactive thiolate to activate its fusogenic potential. Fusion occurs at the host cell plasma membrane. The transmembrane protein (TM) acts as a class I viral fusion protein. Under the current model, the protein has at least 3 conformational states: pre-fusion native state, pre-hairpin intermediate state, and post-fusion hairpin state. During viral and target cell membrane fusion, the coiled coil regions (heptad repeats) assume a trimer-of-hairpins structure, positioning the fusion peptide in close proximity to the C-terminal region of the ectodomain. The formation of this structure appears to drive apposition and subsequent fusion of viral and target cell membranes. Membranes fusion leads to delivery of the nucleocapsid into the cytoplasm. The protein is Envelope glycoprotein gp95 (env) of Rous sarcoma virus subgroup A (strain Schmidt-Ruppin) (RSV-SR-A).